Consider the following 295-residue polypeptide: Putative ribose uptake protein RbsU (295 aa).

The next 10 helical transmembrane spans lie at alanine 5–serine 24, isoleucine 34–phenylalanine 56, phenylalanine 63–phenylalanine 80, threonine 95–tryptophan 114, leucine 121–tryptophan 139, alanine 154–alanine 171, phenylalanine 183–glycine 205, isoleucine 220–alanine 237, leucine 244–leucine 266, and threonine 276–valine 293.

Belongs to the GRP transporter (TC 2.A.7.5) family.

It localises to the cell membrane. Could be involved in the uptake of ribose. The sequence is that of Putative ribose uptake protein RbsU (rbsU) from Enterococcus faecalis (strain ATCC 700802 / V583).